Reading from the N-terminus, the 259-residue chain is Ferritin-4, chloroplastic (259 aa).

Residues 1 to 57 (MLLKTVSSSSSSALSLVNFHGVKKDVSPLLPSISSNLRVSSGKSGNLTFSFRASKSS) constitute a chloroplast transit peptide. The segment at 58–90 (TTDALSGVVFEPFKEVKKELDLVPTSSHLSLAR) is extension peptide (EP). In terms of domain architecture, Ferritin-like diiron spans 91–244 (QKYSDECEAA…EYVAQLRRVG (154 aa)). 5 residues coordinate Fe cation: Glu108, Glu143, His146, Glu192, and Gln226.

It belongs to the ferritin family. As to quaternary structure, oligomer of 24 subunits. There are two types of subunits: L (light) chain and H (heavy) chain. The major chain can be light or heavy, depending on the species and tissue type. The functional molecule forms a roughly spherical shell with a diameter of 12 nm and contains a central cavity into which the insoluble mineral iron core is deposited.

It is found in the plastid. The protein localises to the chloroplast. It catalyses the reaction 4 Fe(2+) + O2 + 4 H(+) = 4 Fe(3+) + 2 H2O. Stores iron in a soluble, non-toxic, readily available form. Important for iron homeostasis. Has ferroxidase activity. Iron is taken up in the ferrous form and deposited as ferric hydroxides after oxidation. This chain is Ferritin-4, chloroplastic (FER4), found in Arabidopsis thaliana (Mouse-ear cress).